The chain runs to 169 residues: Lipoprotein signal peptidase (169 aa).

A run of 3 helical transmembrane segments spans residues M1 to V21, W68 to L88, and H94 to Y114. Active-site residues include D124 and D143. The chain crosses the membrane as a helical span at residues F135–L155.

The protein belongs to the peptidase A8 family.

It is found in the cell inner membrane. It carries out the reaction Release of signal peptides from bacterial membrane prolipoproteins. Hydrolyzes -Xaa-Yaa-Zaa-|-(S,diacylglyceryl)Cys-, in which Xaa is hydrophobic (preferably Leu), and Yaa (Ala or Ser) and Zaa (Gly or Ala) have small, neutral side chains.. Its pathway is protein modification; lipoprotein biosynthesis (signal peptide cleavage). Its function is as follows. This protein specifically catalyzes the removal of signal peptides from prolipoproteins. This chain is Lipoprotein signal peptidase, found in Ectopseudomonas mendocina (strain ymp) (Pseudomonas mendocina).